Consider the following 209-residue polypeptide: MSGQGFSNADTGNKPADPYKQANLDTEVPLDQKINDLSSFMTSNKFSMMTTRDSKTGYLLSRCMALAATESGGIDLLFHTNTESGKTDDLKSDEHINISFLNSTTGDWASVSGTASIVTDRDLVRKHYNPHLKAWFGDLGDGVHDGGPEDPRVGVIRVKMVTAHYAISTKNIVGKVADVAQGVITGKPATVNKLREISEQEVQSWRSSH.

Residues 1-11 (MSGQGFSNADT) show a composition bias toward polar residues. A disordered region spans residues 1–24 (MSGQGFSNADTGNKPADPYKQANL).

This chain is Protein bli-3 (bli-3), found in Neurospora crassa (strain ATCC 24698 / 74-OR23-1A / CBS 708.71 / DSM 1257 / FGSC 987).